The sequence spans 435 residues: Origin recognition complex subunit 5 (435 aa).

Gly-37 to Thr-44 contributes to the ATP binding site.

Belongs to the ORC5 family. In terms of assembly, component of ORC, a complex composed of at least 6 subunits: ORC1, ORC2, ORC3, ORC4, ORC5 and ORC6. ORC is regulated in a cell-cycle dependent manner. It is sequentially assembled at the exit from anaphase of mitosis and disassembled as cells enter S phase. In terms of processing, multi-mono-ubiquitinated by OBI1; ubiquitination is important for efficient DNA replication origin site activation. Ubiquitination levels are low in mitotic and early G1-phAse cells and are induced in late G1-/early S-phase, peaking in S-phase and decrease toward the end of the cell cycle. In terms of tissue distribution, abundant in spleen, ovary, prostate, testis, and colon mucosa.

The protein resides in the nucleus. It is found in the chromosome. Component of the origin recognition complex (ORC) that binds origins of replication. DNA-binding is ATP-dependent. The specific DNA sequences that define origins of replication have not been identified yet. ORC is required to assemble the pre-replication complex necessary to initiate DNA replication. The sequence is that of Origin recognition complex subunit 5 (ORC5) from Homo sapiens (Human).